The primary structure comprises 263 residues: UPF0758 protein Pden_2304 (263 aa).

An MPN domain is found at 141–263 (VLTSWDALLD…ELSFRSEGLL (123 aa)). Zn(2+)-binding residues include His-212, His-214, and Asp-225. The short motif at 212-225 (HNHPSGDPTPSQAD) is the JAMM motif element.

It belongs to the UPF0758 family.

The polypeptide is UPF0758 protein Pden_2304 (Paracoccus denitrificans (strain Pd 1222)).